The following is a 603-amino-acid chain: Thread biopolymer filament subunit gamma (603 aa).

Residues 1–191 form a head region; sequence MASHSSVSYR…ENETMEEELK (191 aa). One can recognise an IF rod domain in the interval 158 to 476; that stretch reads VKNILGTLNQ…KLLEGQELMV (319 aa). A coil 1A region spans residues 193 to 227; sequence LTGGVPMSPDSTVNLENVETQVTEMLTEVSNLTLE. A linker 1 region spans residues 228–240; sequence RVRLEIDVDHLRA. The coil 1B stretch occupies residues 241–341; the sequence is TADEIKSKYE…DALNVMREEY (101 aa). The linker 12 stretch occupies residues 342–362; the sequence is QQVVTKNVQEAETYCKMQIDQ. The interval 363–381 is coil 2A; it reads IQGISTQTTEQISILDKEI. The interval 382 to 389 is linker 2; it reads NTLEKELQ. Residues 390–510 form a coil 2B region; that stretch reads PLNVEYQRLL…SSVGYGASST (121 aa). The tail stretch occupies residues 511–603; it reads TLGAISGGYS…GHDSTIILQQ (93 aa). Residues 562–587 are compositionally biased toward low complexity; the sequence is SSSGGHSMYSSSSMKRSSSKSASASA. Residues 562–603 are disordered; it reads SSSGGHSMYSSSSMKRSSSKSASASAGGYGTSGHDSTIILQQ.

It belongs to the intermediate filament family. Coiled-coil heterodimer of an alpha and a gamma subunit. Assemble into 10 nm filaments. Forms a massive, conical, intermediate filament biopolymer of approximately 60 cm.

The protein localises to the secreted. It localises to the extracellular space. Its function is as follows. Released extracellularly into seawater and provides physical and biological defense against invasive organism by modulation of the viscoelastic properties of mucus. The sequence is that of Thread biopolymer filament subunit gamma from Eptatretus stoutii (Pacific hagfish).